The primary structure comprises 555 residues: Phosphomethylpyrimidine synthase (555 aa).

The disordered stretch occupies residues valine 78–arginine 104. Substrate contacts are provided by residues asparagine 191, methionine 220, tyrosine 249, histidine 285, serine 305–glycine 307, aspartate 346–arginine 349, and glutamate 385. Histidine 389 contacts Zn(2+). Tyrosine 412 contributes to the substrate binding site. Histidine 453 contributes to the Zn(2+) binding site. Cysteine 535, cysteine 538, and cysteine 543 together coordinate [4Fe-4S] cluster.

It belongs to the ThiC family. [4Fe-4S] cluster serves as cofactor.

It catalyses the reaction 5-amino-1-(5-phospho-beta-D-ribosyl)imidazole + S-adenosyl-L-methionine = 4-amino-2-methyl-5-(phosphooxymethyl)pyrimidine + CO + 5'-deoxyadenosine + formate + L-methionine + 3 H(+). Its pathway is cofactor biosynthesis; thiamine diphosphate biosynthesis. Catalyzes the synthesis of the hydroxymethylpyrimidine phosphate (HMP-P) moiety of thiamine from aminoimidazole ribotide (AIR) in a radical S-adenosyl-L-methionine (SAM)-dependent reaction. The protein is Phosphomethylpyrimidine synthase of Chlorobaculum parvum (strain DSM 263 / NCIMB 8327) (Chlorobium vibrioforme subsp. thiosulfatophilum).